Consider the following 390-residue polypeptide: Chorismate synthase 2 (390 aa).

Positions 39 and 45 each coordinate NADP(+). Residues Arg132–Ser134, Asn253–Ala254, Gly298, Lys313–Thr317, and Arg339 each bind FMN.

The protein belongs to the chorismate synthase family. As to quaternary structure, homotetramer. It depends on FMNH2 as a cofactor.

It catalyses the reaction 5-O-(1-carboxyvinyl)-3-phosphoshikimate = chorismate + phosphate. The protein operates within metabolic intermediate biosynthesis; chorismate biosynthesis; chorismate from D-erythrose 4-phosphate and phosphoenolpyruvate: step 7/7. In terms of biological role, catalyzes the anti-1,4-elimination of the C-3 phosphate and the C-6 proR hydrogen from 5-enolpyruvylshikimate-3-phosphate (EPSP) to yield chorismate, which is the branch point compound that serves as the starting substrate for the three terminal pathways of aromatic amino acid biosynthesis. This reaction introduces a second double bond into the aromatic ring system. The chain is Chorismate synthase 2 from Bacillus cereus (strain ATCC 14579 / DSM 31 / CCUG 7414 / JCM 2152 / NBRC 15305 / NCIMB 9373 / NCTC 2599 / NRRL B-3711).